We begin with the raw amino-acid sequence, 316 residues long: Metal tolerance protein 8 (316 aa).

Residues 1–15 lie on the Cytoplasmic side of the membrane; that stretch reads MGPVRHILNERKSRK. The chain crosses the membrane as a helical span at residues 16–36; it reads IAAFLLINTAYMFVEFTSGFM. Residues 37 to 45 are Vacuolar-facing; that stretch reads SDSLGLISD. A helical membrane pass occupies residues 46–66; it reads ACHMLFDCAALAIGLYASYIA. Topologically, residues 67–80 are cytoplasmic; the sequence is RLPANGLYNYGRGR. The helical transmembrane segment at 81–101 threads the bilayer; that stretch reads FEVLSGYVNAVFLVLVGALIV. Residues 102-116 lie on the Vacuolar side of the membrane; that stretch reads LESFERILEPREIST. A helical transmembrane segment spans residues 117–137; it reads SSLLTVSIGGLVVNVIGLVFF. The Cytoplasmic segment spans residues 138 to 176; sequence HEEHHHAHGEAHSCNGGLQSSENHNKSRNRHHIDHNMEG. The disordered stretch occupies residues 147–166; sequence EAHSCNGGLQSSENHNKSRN. Residues 177–197 form a helical membrane-spanning segment; the sequence is IFLHVLADTMGSVGVVISTLL. The Vacuolar portion of the chain corresponds to 198 to 202; the sequence is IKYKG. The chain crosses the membrane as a helical span at residues 203–223; that stretch reads WLIADPICSVFISIMIVSSVL. Over 224-316 the chain is Cytoplasmic; the sequence is PLLRNSAEIL…LTIQIECVKR (93 aa).

It belongs to the cation diffusion facilitator (CDF) transporter (TC 2.A.4) family. SLC30A subfamily.

The protein localises to the vacuole membrane. In terms of biological role, involved in sequestration of excess metal in the cytoplasm into vacuoles to maintain metal homeostasis. In Oryza sativa subsp. japonica (Rice), this protein is Metal tolerance protein 8 (MTP8).